The primary structure comprises 390 residues: GTP 3',8-cyclase, mitochondrial (390 aa).

Residues 1–45 (MRRCFSKITDCHLGFKNSNFLLVGSEVGSGSVTRTITTTTSERLF) constitute a mitochondrion transit peptide. In terms of domain architecture, Radical SAM core spans 69–290 (KFGRLHTYLR…PSIKRMQDHP (222 aa)). Position 78 (Arg-78) interacts with GTP. [4Fe-4S] cluster contacts are provided by Cys-85 and Cys-89. S-adenosyl-L-methionine is bound at residue Tyr-91. Residue Cys-92 participates in [4Fe-4S] cluster binding. GTP is bound at residue Arg-128. Residue Gly-132 participates in S-adenosyl-L-methionine binding. Position 159 (Thr-159) interacts with GTP. Ser-183 serves as a coordination point for S-adenosyl-L-methionine. Lys-220 is a GTP binding site. Met-254 contacts S-adenosyl-L-methionine. Positions 317 and 320 each coordinate [4Fe-4S] cluster. 322–324 (RLR) lines the GTP pocket. Cys-334 provides a ligand contact to [4Fe-4S] cluster.

Belongs to the radical SAM superfamily. MoaA family. Homodimer. [4Fe-4S] cluster is required as a cofactor. In terms of tissue distribution, expressed in all organs, with an abundant expression in the roots.

Its subcellular location is the mitochondrion matrix. It carries out the reaction GTP + AH2 + S-adenosyl-L-methionine = (8S)-3',8-cyclo-7,8-dihydroguanosine 5'-triphosphate + 5'-deoxyadenosine + L-methionine + A + H(+). The protein operates within cofactor biosynthesis; molybdopterin biosynthesis. Its function is as follows. Catalyzes the cyclization of GTP to (8S)-3',8-cyclo-7,8-dihydroguanosine 5'-triphosphate. In Arabidopsis thaliana (Mouse-ear cress), this protein is GTP 3',8-cyclase, mitochondrial (CNX2).